A 549-amino-acid chain; its full sequence is Cytoplasmic trehalase (549 aa).

Residues Arg-168, 175–176, Asn-212, 221–223, 292–294, and Gly-324 contribute to the substrate site; these read WD, RSQ, and RDE. Residues Asp-326 and Glu-509 each act as proton donor/acceptor in the active site. Glu-525 lines the substrate pocket.

Belongs to the glycosyl hydrolase 37 family. Monomer.

It is found in the cytoplasm. The enzyme catalyses alpha,alpha-trehalose + H2O = alpha-D-glucose + beta-D-glucose. Its pathway is glycan degradation; trehalose degradation; D-glucose from alpha,alpha-trehalose: step 1/1. Its function is as follows. Hydrolyzes trehalose to glucose. Could be involved, in cells returning to low osmolarity conditions, in the utilization of the accumulated cytoplasmic trehalose, which was synthesized in response to high osmolarity. This Shigella boydii serotype 4 (strain Sb227) protein is Cytoplasmic trehalase.